A 222-amino-acid chain; its full sequence is Small ribosomal subunit protein uS7m (222 aa).

The N-terminal 14 residues, 1–14 (MTTKLARFAQKRWI), are a transit peptide targeting the mitochondrion.

This sequence belongs to the universal ribosomal protein uS7 family. As to quaternary structure, component of the mitochondrial ribosome small subunit (28S) which comprises a 12S rRNA and about 30 distinct proteins.

It localises to the mitochondrion. In Caenorhabditis elegans, this protein is Small ribosomal subunit protein uS7m (mrps-7).